The chain runs to 213 residues: 5''-phosphoribostamycin phosphatase (213 aa).

H8 acts as the Tele-phosphohistidine intermediate in catalysis. The active site involves H155.

Belongs to the histidine phosphatase superfamily.

It carries out the reaction 5''-phosphoribostamycin + H2O = ribostamycin + phosphate. It functions in the pathway antibiotic biosynthesis; butirosin biosynthesis. In terms of biological role, catalyzes dephosphorylation of 5''-phosphoribostamycin to generate ribostamycinin the biosynthetic pathway of butirosin. The sequence is that of 5''-phosphoribostamycin phosphatase (btrP) from Niallia circulans (Bacillus circulans).